Consider the following 83-residue polypeptide: Protein midgut expression 1 (83 aa).

As to expression, endoderm-specific pattern of expression during embryogenesis; anterior and posterior midgut primordia.

In terms of biological role, involved in morphogenesis and development. This Drosophila melanogaster (Fruit fly) protein is Protein midgut expression 1 (mex1).